The primary structure comprises 252 residues: Adenosylcobinamide-GDP ribazoletransferase (252 aa).

A run of 7 helical transmembrane segments spans residues 4-24 (LFKG…PYVE), 38-58 (PIIG…INYL), 60-80 (ISIV…TGML), 113-133 (FSVI…HSFL), 141-161 (ILMF…ITII), 190-210 (LVCI…LLIV), and 232-252 (VAGF…CLFT).

This sequence belongs to the CobS family. It depends on Mg(2+) as a cofactor.

The protein localises to the cell membrane. The catalysed reaction is alpha-ribazole + adenosylcob(III)inamide-GDP = adenosylcob(III)alamin + GMP + H(+). It catalyses the reaction alpha-ribazole 5'-phosphate + adenosylcob(III)inamide-GDP = adenosylcob(III)alamin 5'-phosphate + GMP + H(+). It functions in the pathway cofactor biosynthesis; adenosylcobalamin biosynthesis; adenosylcobalamin from cob(II)yrinate a,c-diamide: step 7/7. Joins adenosylcobinamide-GDP and alpha-ribazole to generate adenosylcobalamin (Ado-cobalamin). Also synthesizes adenosylcobalamin 5'-phosphate from adenosylcobinamide-GDP and alpha-ribazole 5'-phosphate. In Clostridium botulinum (strain Alaska E43 / Type E3), this protein is Adenosylcobinamide-GDP ribazoletransferase.